A 53-amino-acid polypeptide reads, in one-letter code: MKLFGMIFLIATVAFILLGVLLKLAAFFFVSILTLIAAIVLFTVLKKNQHNQT.

The next 2 membrane-spanning stretches (helical) occupy residues 3 to 22 (LFGMIFLIATVAFILLGVLL) and 26 to 45 (AFFFVSILTLIAAIVLFTVL).

It localises to the cell membrane. This is an uncharacterized protein from Bacillus subtilis (strain 168).